Here is a 237-residue protein sequence, read N- to C-terminus: Ribosomal RNA small subunit methyltransferase G (237 aa).

S-adenosyl-L-methionine contacts are provided by residues glycine 78, phenylalanine 83, 129–130 (AE), and arginine 148.

Belongs to the methyltransferase superfamily. RNA methyltransferase RsmG family.

Its subcellular location is the cytoplasm. Its function is as follows. Specifically methylates the N7 position of a guanine in 16S rRNA. In Streptococcus pyogenes serotype M6 (strain ATCC BAA-946 / MGAS10394), this protein is Ribosomal RNA small subunit methyltransferase G.